The primary structure comprises 272 residues: Bis(5'-nucleosyl)-tetraphosphatase, symmetrical (272 aa).

This sequence belongs to the Ap4A hydrolase family.

The catalysed reaction is P(1),P(4)-bis(5'-adenosyl) tetraphosphate + H2O = 2 ADP + 2 H(+). Functionally, hydrolyzes diadenosine 5',5'''-P1,P4-tetraphosphate to yield ADP. In Chromohalobacter salexigens (strain ATCC BAA-138 / DSM 3043 / CIP 106854 / NCIMB 13768 / 1H11), this protein is Bis(5'-nucleosyl)-tetraphosphatase, symmetrical.